We begin with the raw amino-acid sequence, 232 residues long: Putative homeobox protein NANOG2 (232 aa).

The disordered stretch occupies residues 1–39 (MDLPIQDSHDSSTSPKGKQPTTAEKSATKKEDKVPVKKQ). The span at 11-25 (SSTSPKGKQPTTAEK) shows a compositional bias: polar residues. The span at 26-35 (SATKKEDKVP) shows a compositional bias: basic and acidic residues. A run of 8 repeats spans residues 123–127 (WSNQT), 128–132 (WNNST), 133–137 (WSNQT), 143–147 (WSNHS), 148–152 (WNTQT), 153–157 (WCTQS), 158–162 (WNNQA), and 163–167 (WNSPF). The interval 123-167 (WSNQTWNNSTWSNQTQNIQSWSNHSWNTQTWCTQSWNNQAWNSPF) is 8 X repeats starting with a Trp in each unit. The tract at residues 123-167 (WSNQTWNNSTWSNQTQNIQSWSNHSWNTQTWCTQSWNNQAWNSPF) is sufficient for transactivation activity. The tract at residues 168-232 (YNCGEESLQS…YSMNMQPEDV (65 aa)) is sufficient for strong transactivation activity.

The protein belongs to the Nanog homeobox family.

It localises to the nucleus. In terms of biological role, probable transcriptional regulator. This is Putative homeobox protein NANOG2 (NANOGP1) from Homo sapiens (Human).